A 339-amino-acid polypeptide reads, in one-letter code: Methylthioribose-1-phosphate isomerase (339 aa).

Substrate contacts are provided by residues 49-51, Arg-86, and Gln-187; that span reads RGA. The active-site Proton donor is the Asp-228. 238–239 is a substrate binding site; sequence NK.

The protein belongs to the eIF-2B alpha/beta/delta subunits family. MtnA subfamily.

It catalyses the reaction 5-(methylsulfanyl)-alpha-D-ribose 1-phosphate = 5-(methylsulfanyl)-D-ribulose 1-phosphate. It functions in the pathway amino-acid biosynthesis; L-methionine biosynthesis via salvage pathway; L-methionine from S-methyl-5-thio-alpha-D-ribose 1-phosphate: step 1/6. In terms of biological role, catalyzes the interconversion of methylthioribose-1-phosphate (MTR-1-P) into methylthioribulose-1-phosphate (MTRu-1-P). The sequence is that of Methylthioribose-1-phosphate isomerase from Cronobacter sakazakii (strain ATCC BAA-894) (Enterobacter sakazakii).